Consider the following 223-residue polypeptide: Small ribosomal subunit protein uS3 (223 aa).

One can recognise a KH type-2 domain in the interval 39-107 (IRQFLRKKPS…EVWLEIAEIK (69 aa)).

It belongs to the universal ribosomal protein uS3 family. In terms of assembly, part of the 30S ribosomal subunit. Forms a tight complex with proteins S10 and S14.

Binds the lower part of the 30S subunit head. Binds mRNA in the 70S ribosome, positioning it for translation. This is Small ribosomal subunit protein uS3 from Chlamydia pneumoniae (Chlamydophila pneumoniae).